Consider the following 409-residue polypeptide: LL-diaminopimelate aminotransferase (409 aa).

Residues tyrosine 15 and glycine 42 each contribute to the substrate site. Pyridoxal 5'-phosphate-binding positions include tyrosine 72, 108-109 (AK), tyrosine 132, asparagine 186, tyrosine 217, and 245-247 (SFS). Residues lysine 109, tyrosine 132, and asparagine 186 each coordinate substrate. Residue lysine 248 is modified to N6-(pyridoxal phosphate)lysine. Positions 256 and 291 each coordinate pyridoxal 5'-phosphate. Residues asparagine 291 and arginine 387 each contribute to the substrate site.

This sequence belongs to the class-I pyridoxal-phosphate-dependent aminotransferase family. LL-diaminopimelate aminotransferase subfamily. In terms of assembly, homodimer. Pyridoxal 5'-phosphate serves as cofactor.

It carries out the reaction (2S,6S)-2,6-diaminopimelate + 2-oxoglutarate = (S)-2,3,4,5-tetrahydrodipicolinate + L-glutamate + H2O + H(+). Its pathway is amino-acid biosynthesis; L-lysine biosynthesis via DAP pathway; LL-2,6-diaminopimelate from (S)-tetrahydrodipicolinate (aminotransferase route): step 1/1. In terms of biological role, involved in the synthesis of meso-diaminopimelate (m-DAP or DL-DAP), required for both lysine and peptidoglycan biosynthesis. Catalyzes the direct conversion of tetrahydrodipicolinate to LL-diaminopimelate. In Parabacteroides distasonis (strain ATCC 8503 / DSM 20701 / CIP 104284 / JCM 5825 / NCTC 11152), this protein is LL-diaminopimelate aminotransferase.